The chain runs to 238 residues: MRHLHHQTSQTKLWAVIPAAGSGSRFSKTELKQYQYIQDATVIEHTVKRLSQLPLTGYVLAIGKQDTFASTLSFQDKHKAHFCNGGVERVHSVLNALNYLSQIADEDDWVLVHDAARPCVTFECLNTLVKNAIETNQSAILAIPVRDTLKQVNQEQQIDKTVSRELLWQAQTPQIAKIGILKKAIETALKNNLTITDEASALESIGESVLVVMGRSDNIKITYPDDLELARLILQSQN.

Belongs to the IspD/TarI cytidylyltransferase family. IspD subfamily.

It catalyses the reaction 2-C-methyl-D-erythritol 4-phosphate + CTP + H(+) = 4-CDP-2-C-methyl-D-erythritol + diphosphate. It functions in the pathway isoprenoid biosynthesis; isopentenyl diphosphate biosynthesis via DXP pathway; isopentenyl diphosphate from 1-deoxy-D-xylulose 5-phosphate: step 2/6. In terms of biological role, catalyzes the formation of 4-diphosphocytidyl-2-C-methyl-D-erythritol from CTP and 2-C-methyl-D-erythritol 4-phosphate (MEP). The chain is 2-C-methyl-D-erythritol 4-phosphate cytidylyltransferase from Acinetobacter baumannii (strain ACICU).